The sequence spans 1085 residues: Aminopeptidase N (1085 aa).

A signal peptide (required for ER targeting and membrane association; not cleaved) is located at residues 1–30 (MKLTKGCAYKYIIFTVLILANILYDNKKRC). The interval 1 to 200 (MKLTKGCAYK…VKKNEPKIHY (200 aa)) is sufficient for targeting to the food vacuole. Residues 108–130 (EKGDNNNNNHQNNNGNDNKKRLG) are disordered. Low complexity predominate over residues 112-123 (NNNNNHQNNNGN). Residues Glu-319, Gly-460, Ala-461, and Glu-463 each contribute to the a peptide site. Residue His-496 coordinates Zn(2+). The active-site Proton acceptor is the Glu-497. Zn(2+) contacts are provided by His-500 and Glu-519.

The protein belongs to the peptidase M1 family. In terms of assembly, heterodimer of the p68 form and the p35 form which are derived from the p120 precursor. It depends on Zn(2+) as a cofactor. The full length protein appears to be cleaved into a 120 kDa precursor. This precursor is then proteolytically cleaved at the N-terminus generating a 96 kDa form which is further processed at the C-terminus into 68 kDa and 35 kDa forms that remain associated.

The protein localises to the parasitophorous vacuole membrane. It is found in the nucleus. It localises to the cytoplasm. Its subcellular location is the vacuole lumen. Inhibited by 1,10-phenanthroline, EDTA and bestatin. Inhibited by (Benzyl)Tyr-Ala (BTA). Activity is not affected by phosphoramidin, PMSF, leupeptin, iodoacetamide or pepstatin. Displays aminopeptidase activity with a broad substrate specificity. Preferentially, cleaves after Leu and Met, but also cleaves after Ala and Arg. Low activity towards Lys, Phe, Tyr, Trp, Gln, Ser and Gly and negligible activity towards Glu, Asp, Pro, Ile, Thr, Val, His and Asn. Has dipeptidase activity. Plays a role in the terminal stages of host hemoglobin digestion by cleaving the N-terminal residue of small hemoglobin-derived oligopeptides. The protein is Aminopeptidase N of Plasmodium falciparum (isolate 3D7).